The sequence spans 339 residues: Trace amine-associated receptor 2 (339 aa).

Topologically, residues 1 to 36 are extracellular; the sequence is MTSFEAQQETFDCSEYGNGSCPENERSLGVRAAMYS. Asn18 is a glycosylation site (N-linked (GlcNAc...) asparagine). 2 disulfide bridges follow: Cys21-Cys185 and Cys104-Cys189. A helical transmembrane segment spans residues 37-57; it reads LMAGAIFITIFGNLVMIISIS. Residues 58–67 are Cytoplasmic-facing; it reads YFKQLHTPTN. The chain crosses the membrane as a helical span at residues 68 to 88; that stretch reads LLILSMAVTDFLLGFTIMPYS. Residues 89 to 106 are Extracellular-facing; sequence MVRSVENCWYFGLTFCKI. The chain crosses the membrane as a helical span at residues 107 to 127; that stretch reads HYSFDLMLSITSIFHLCSVAI. Residues 128-150 lie on the Cytoplasmic side of the membrane; sequence DRFYAICHPLHYCTKMTIPVVKR. The helical transmembrane segment at 151 to 171 threads the bilayer; it reads LLLVCWSVPGAFAFGVVFSEA. The Extracellular portion of the chain corresponds to 172 to 195; sequence YADGIEGYDILVACSSSCPVMFNK. The chain crosses the membrane as a helical span at residues 196-216; the sequence is LWGTTLFVAGFFTPSSMMVGI. The Cytoplasmic portion of the chain corresponds to 217–251; the sequence is YGKIFAVSKKHARVIDNLPENQNNQMRKDKKAAKT. A helical membrane pass occupies residues 252–272; it reads LGIVMGVFLLCWFPCFFTILL. Residues 273–287 are Extracellular-facing; it reads DPFLNFSTPAILFDA. Residue Asn277 is glycosylated (N-linked (GlcNAc...) asparagine). Residues 288–310 traverse the membrane as a helical segment; that stretch reads LTWFGYFNSTCNPLIYGFFYPWF. Topologically, residues 311–339 are cytoplasmic; it reads RRALRYILLGKIFSSHFHNTNLFTQKETE.

This sequence belongs to the G-protein coupled receptor 1 family.

Its subcellular location is the cell membrane. Functionally, orphan olfactory receptor specific for trace amines. Trace amine compounds are enriched in animal body fluids and act on trace amine-associated receptors (TAARs) to elicit both intraspecific and interspecific innate behaviors. Ligand-binding causes a conformation change that triggers signaling via the G(s)-class of G-proteins which activate adenylate cyclase. May also be required to provide olfactory input into limbic brain areas to regulate emotional behaviors likely via modulation of the dopamine system. The chain is Trace amine-associated receptor 2 (Taar2) from Rattus norvegicus (Rat).